Here is a 324-residue protein sequence, read N- to C-terminus: Annexin A10 (324 aa).

Annexin repeat units follow at residues 17 to 88 (FNPI…GLMY), 89 to 160 (PPPL…NLVQ), 171 to 243 (AMAA…AIVL), and 247 to 318 (DKPA…AICA).

It belongs to the annexin family.

This Homo sapiens (Human) protein is Annexin A10 (ANXA10).